Here is a 521-residue protein sequence, read N- to C-terminus: Apolipoprotein N-acyltransferase (521 aa).

6 helical membrane-spanning segments follow: residues 34 to 54 (LAAPPTGWGVLVWVALVPLLV), 64 to 84 (AFWLGTLAGMVYYAILLRWLL), 100 to 120 (LAIALGAWLFVSASQAWVIGL), 137 to 157 (LFAVGLWVGLHWLWGQGETAF), 176 to 196 (VALGGAQLLVGLAVAVNALVA), and 206 to 226 (YAGLAALLAASVYLYGWWQLA). One can recognise a CN hydrolase domain in the interval 240 to 480 (IQGNIAQARK…YAAFVEPVRL (241 aa)). Glutamate 281 serves as the catalytic Proton acceptor. The active site involves lysine 341. The Nucleophile role is filled by cysteine 392. The chain crosses the membrane as a helical span at residues 488 to 508 (ALWGDWFVPLSAALALLGLIA).

The protein belongs to the CN hydrolase family. Apolipoprotein N-acyltransferase subfamily.

The protein resides in the cell inner membrane. It catalyses the reaction N-terminal S-1,2-diacyl-sn-glyceryl-L-cysteinyl-[lipoprotein] + a glycerophospholipid = N-acyl-S-1,2-diacyl-sn-glyceryl-L-cysteinyl-[lipoprotein] + a 2-acyl-sn-glycero-3-phospholipid + H(+). The protein operates within protein modification; lipoprotein biosynthesis (N-acyl transfer). Catalyzes the phospholipid dependent N-acylation of the N-terminal cysteine of apolipoprotein, the last step in lipoprotein maturation. This is Apolipoprotein N-acyltransferase from Gloeobacter violaceus (strain ATCC 29082 / PCC 7421).